The sequence spans 297 residues: HTH-type transcriptional regulator ArgP (297 aa).

In terms of domain architecture, HTH lysR-type spans 2–58 (FDYKLLSALAAVVEQAGFERAAQVLGLSQSAISQRIKLLEARVGQPVLVRGTPPSPT). A DNA-binding region (H-T-H motif) is located at residues 19-38 (FERAAQVLGLSQSAISQRIK).

The protein belongs to the LysR transcriptional regulatory family. Homodimer.

In terms of biological role, controls the transcription of genes involved in arginine and lysine metabolism. This is HTH-type transcriptional regulator ArgP from Pseudomonas fluorescens (strain Pf0-1).